We begin with the raw amino-acid sequence, 614 residues long: Membrane protein insertase YidC (614 aa).

The helical transmembrane segment at 6–26 (IVLLIIFSTSLLFLWDAWIKE) threads the bilayer. 2 stretches are compositionally biased toward polar residues: residues 34-48 (PAITQADSSAGSTQS) and 60-70 (ELTSSQASPDT). The interval 34–87 (PAITQADSSAGSTQSRNDDSLPVPGSELTSSQASPDTNGIPASGGNGDSVTPRL) is disordered. Helical transmembrane passes span 380-400 (WGVAIILLTMTVKLLFFPLSA), 450-470 (FPILVQIPVFIALYWTILAAV), 484-504 (LSSPDPFYMLPLLMGISMFVQ), and 524-544 (PVAFSAIFFFFPAGLVLYSLV). The segment at 562 to 614 (TAPSKDTPEPPVSKQVNSSENPETTANSPADSPKQPQTPANNPRKMYKRTRKK) is disordered. Residues 575-602 (KQVNSSENPETTANSPADSPKQPQTPAN) show a composition bias toward polar residues.

The protein belongs to the OXA1/ALB3/YidC family. Type 1 subfamily. In terms of assembly, interacts with the Sec translocase complex via SecD. Specifically interacts with transmembrane segments of nascent integral membrane proteins during membrane integration.

The protein resides in the cell inner membrane. Its function is as follows. Required for the insertion and/or proper folding and/or complex formation of integral membrane proteins into the membrane. Involved in integration of membrane proteins that insert both dependently and independently of the Sec translocase complex, as well as at least some lipoproteins. Aids folding of multispanning membrane proteins. In Nitrosomonas europaea (strain ATCC 19718 / CIP 103999 / KCTC 2705 / NBRC 14298), this protein is Membrane protein insertase YidC.